The following is a 278-amino-acid chain: Transcription initiation factor TFIID subunit 9 (278 aa).

The tract at residues 193–278 (TTTKTVGSSG…EEEEFEFVTN (86 aa)) is disordered. Residues 200–210 (SSGGSGGGGGQ) are compositionally biased toward gly residues. The span at 231–240 (AAAVGSIAGA) shows a compositional bias: low complexity. A compositionally biased stretch (gly residues) spans 241–259 (SGSGAGSASGGGGGGGSSG). The segment covering 269-278 (EEEEFEFVTN) has biased composition (acidic residues).

Belongs to the TAF9 family. Belongs to the TFIID complex which is composed of TATA binding protein (Tbp) and a number of TBP-associated factors (TAFs). Taf9 and Taf6 exist as a heterotetramer. Interacts with e(y)2.

The protein resides in the nucleus. Its function is as follows. TFIID is a multimeric protein complex that plays a central role in mediating promoter responses to various activators and repressors. This is Transcription initiation factor TFIID subunit 9 from Drosophila melanogaster (Fruit fly).